A 208-amino-acid chain; its full sequence is Small ribosomal subunit protein uS4 (208 aa).

Residues Thr98 to Gln161 enclose the S4 RNA-binding domain.

This sequence belongs to the universal ribosomal protein uS4 family. Part of the 30S ribosomal subunit. Contacts protein S5. The interaction surface between S4 and S5 is involved in control of translational fidelity.

In terms of biological role, one of the primary rRNA binding proteins, it binds directly to 16S rRNA where it nucleates assembly of the body of the 30S subunit. Its function is as follows. With S5 and S12 plays an important role in translational accuracy. The chain is Small ribosomal subunit protein uS4 from Maridesulfovibrio salexigens (strain ATCC 14822 / DSM 2638 / NCIMB 8403 / VKM B-1763) (Desulfovibrio salexigens).